A 249-amino-acid chain; its full sequence is Triosephosphate isomerase (249 aa).

9 to 11 (NWK) is a binding site for substrate. H95 (electrophile) is an active-site residue. E165 acts as the Proton acceptor in catalysis. Residues G171, S211, and 232-233 (GG) contribute to the substrate site.

This sequence belongs to the triosephosphate isomerase family. In terms of assembly, homodimer.

The protein localises to the cytoplasm. It carries out the reaction D-glyceraldehyde 3-phosphate = dihydroxyacetone phosphate. It participates in carbohydrate biosynthesis; gluconeogenesis. It functions in the pathway carbohydrate degradation; glycolysis; D-glyceraldehyde 3-phosphate from glycerone phosphate: step 1/1. Functionally, involved in the gluconeogenesis. Catalyzes stereospecifically the conversion of dihydroxyacetone phosphate (DHAP) to D-glyceraldehyde-3-phosphate (G3P). The sequence is that of Triosephosphate isomerase from Chlorobium phaeobacteroides (strain DSM 266 / SMG 266 / 2430).